A 175-amino-acid polypeptide reads, in one-letter code: MTSQIRQNYSPEVEAAVNHLVNLHLRASYTYLSLGFYFDRDDVALEGVSHFFRELAEEKREAAERLLKMQNQRGGRALFQDVQKPSQDEWGKTLNAMEAALALEKNLNQALLDLHALGSAHTDPHLCDFLENHFLDEEVKLLKKMGDHLTNIRRLSGPQASLGEYLFERLTLKHD.

The Ferritin-like diiron domain occupies 7-156 (QNYSPEVEAA…DHLTNIRRLS (150 aa)). The Fe cation site is built by E54, E57, E58, E61, and E64.

The protein belongs to the ferritin family. In terms of assembly, oligomer of 24 subunits. There are two types of subunits: L (light) chain and H (heavy) chain. The major chain can be light or heavy, depending on the species and tissue type. The functional molecule forms a roughly spherical shell with a diameter of 12 nm and contains a central cavity into which the insoluble mineral iron core is deposited. Interacts with NCOA4.

It localises to the cytoplasmic vesicle. The protein localises to the autophagosome. Its subcellular location is the cytoplasm. It is found in the autolysosome. Its function is as follows. Stores iron in a soluble, non-toxic, readily available form. Important for iron homeostasis. Iron is taken up in the ferrous form and deposited as ferric hydroxides after oxidation. Also plays a role in delivery of iron to cells. Mediates iron uptake in capsule cells of the developing kidney. Delivery to lysosomes by the cargo receptor NCOA4 for autophagic degradation and release or iron. This is Ferritin light chain (FTL) from Oryctolagus cuniculus (Rabbit).